The chain runs to 80 residues: MKWNNMLKAAGIAVLLFSVFAYAAPSLKAVQAKTPTVSTHTYKKIKELTYPQVHHVGNAAFEKKINQELKAYMNNRIRNT.

The N-terminal stretch at 1-23 is a signal peptide; that stretch reads MKWNNMLKAAGIAVLLFSVFAYA.

This is an uncharacterized protein from Bacillus subtilis (strain 168).